The chain runs to 499 residues: Lanosterol 14-alpha demethylase (499 aa).

The chain crosses the membrane as a helical span at residues 13-35 (SAVLQMSLTSVLLTASVFTLTLG). Residue C441 coordinates heme.

Belongs to the cytochrome P450 family. The cofactor is heme. Strongly expressed in intestine. Moderately expressed in liver, with higher levels in females compared to males. Also detected at low levels in brain, eye, kidney and testis.

The protein resides in the endoplasmic reticulum membrane. Its subcellular location is the membrane. It catalyses the reaction a 14alpha-methyl steroid + 3 reduced [NADPH--hemoprotein reductase] + 3 O2 = a Delta(14) steroid + formate + 3 oxidized [NADPH--hemoprotein reductase] + 4 H2O + 4 H(+). The enzyme catalyses lanosterol + 3 reduced [NADPH--hemoprotein reductase] + 3 O2 = 4,4-dimethyl-5alpha-cholesta-8,14,24-trien-3beta-ol + formate + 3 oxidized [NADPH--hemoprotein reductase] + 4 H2O + 4 H(+). The catalysed reaction is 24,25-dihydrolanosterol + 3 reduced [NADPH--hemoprotein reductase] + 3 O2 = 4,4-dimethyl-8,14-cholestadien-3beta-ol + formate + 3 oxidized [NADPH--hemoprotein reductase] + 4 H2O + 4 H(+). It carries out the reaction a 14alpha-methyl steroid + reduced [NADPH--hemoprotein reductase] + O2 = a 14alpha-hydroxymethyl steroid + oxidized [NADPH--hemoprotein reductase] + H2O + H(+). It catalyses the reaction a 14alpha-hydroxymethyl steroid + reduced [NADPH--hemoprotein reductase] + O2 = a 14alpha-formyl steroid + oxidized [NADPH--hemoprotein reductase] + 2 H2O + H(+). The enzyme catalyses a 14alpha-formyl steroid + reduced [NADPH--hemoprotein reductase] + O2 = a Delta(14) steroid + formate + oxidized [NADPH--hemoprotein reductase] + H2O + 2 H(+). The catalysed reaction is lanosterol + reduced [NADPH--hemoprotein reductase] + O2 = 32-hydroxylanosterol + oxidized [NADPH--hemoprotein reductase] + H2O + H(+). It carries out the reaction 32-hydroxylanosterol + reduced [NADPH--hemoprotein reductase] + O2 = 32-oxolanosterol + oxidized [NADPH--hemoprotein reductase] + 2 H2O + H(+). It catalyses the reaction 32-oxolanosterol + reduced [NADPH--hemoprotein reductase] + O2 = 4,4-dimethyl-5alpha-cholesta-8,14,24-trien-3beta-ol + formate + oxidized [NADPH--hemoprotein reductase] + H2O + 2 H(+). The enzyme catalyses 24,25-dihydrolanosterol + reduced [NADPH--hemoprotein reductase] + O2 = 32-hydroxy-24,25-dihydrolanosterol + oxidized [NADPH--hemoprotein reductase] + H2O + H(+). The catalysed reaction is 32-hydroxy-24,25-dihydrolanosterol + reduced [NADPH--hemoprotein reductase] + O2 = 32-oxo-24,25-dihydrolanosterol + oxidized [NADPH--hemoprotein reductase] + 2 H2O + H(+). It carries out the reaction 32-oxo-24,25-dihydrolanosterol + reduced [NADPH--hemoprotein reductase] + O2 = 4,4-dimethyl-8,14-cholestadien-3beta-ol + formate + oxidized [NADPH--hemoprotein reductase] + H2O + 2 H(+). It participates in steroid biosynthesis; zymosterol biosynthesis; zymosterol from lanosterol: step 1/6. With respect to regulation, inhibited by ketoconazole. May also be inhibited to a lesser extent by propiconazole. In terms of biological role, sterol 14alpha-demethylase that plays a critical role in the cholesterol biosynthesis pathway, being cholesterol the major sterol component in deuterostome membranes as well as a precursor for steroid hormone synthesis. Cytochrome P450 monooxygenase that catalyzes the three-step oxidative removal of the 14alpha-methyl group (C-32) of sterols such as lanosterol (lanosta-8,24-dien-3beta-ol) and 24,25-dihydrolanosterol (DHL) in the form of formate, and converts the sterols to 4,4-dimethyl-5alpha-cholesta-8,14,24-trien-3beta-ol and 4,4-dimethyl-8,14-cholestadien-3beta-ol, respectively, which are intermediates of cholesterol biosynthesis. Can also demethylate substrates not intrinsic to deuterostomes, such as eburicol (24-methylene-24,25-dihydrolanosterol), but at a lower rate than DHL. In Danio rerio (Zebrafish), this protein is Lanosterol 14-alpha demethylase.